We begin with the raw amino-acid sequence, 941 residues long: MADTSHLERMGRELKCPICLSLYNSAVSLSCNHVFCNACIVKSMKMDATCPVCKIPYHRREIRGAPHMDSLVSIYKNMEDASGIKLFVSQNNPSPSDKEKQVRDASVEKASDKNRQGSRKGRASKRNEYGKTKEIDVDAPGPIVMKPSSQTKKRVQLLQNLSAESLTKPTESVETAEKPKDYTENTVIRLDEHPSLNKEGNLSPFFWLRDEDDGENSSQRTESDQLLGTTPVNVPSFSDLMDSDHESPSKEDEQQKPNPGDMFDSEMFEWTQRPCSPEILPSPVKAKVLGRDEIDLTQKKLPKVKVASSKCKNRKAGSARNTVARRSIGVSQEDNMESSAAATISEQQDSRGTSGTIIRNDVNTDENVKAKRATRSKAQSTRVQSDLNVSNEADGKQGTKRKRSSIKSSPAHPIAGPNELSLGTEIVGKGDQDQAHGPSDTHPEKRSPTEKPSLKKRGRKSNASSSLKDLSGKTQKKTSEKKLKLDSHMISSKATQPHGNGILTAGLNQGGDKQDSRNNRKSTVGKDDHTMQVIEKCSTINKSSSGGSAHLRRCNGSLTKKFTCAFCQCSEDTEASGEMTHYYRGEPVSADFNGGSKVIHVHKNCAEWAPNVYFNDLTIVNLDVELTRSRRISCSCCGLKGAALGCYNKSCKNSFHVTCAKLIPECRWDNVKFVMLCPLDASIKLPCEEANSKDRKCKRTPKEPLHSQPKQVSGKANIRELHIKQFHGFSKKLVLSCSGLTVEEKTVIAEFAELSGVTISKNWDSTVTHVIASINENGACKRTLKFMMAILEGKWILTIDWIKACMKNTKYVSEEPYEITMDVHGIREGPYLGRQRALKKKPKLFTGLKFYIMGDFELAYKGYLQDLIVAAGGTILRRRPVSSDDNEASTIVVFSVEPSKKKTLTQRRSDAEALAKSARARAASSSWVLDSIAGCQILVLI.

An RING-type zinc finger spans residues 16–54; the sequence is CPICLSLYNSAVSLSCNHVFCNACIVKSMKMDATCPVCK. Disordered regions lie at residues 87–282 and 303–528; these read FVSQ…ILPS and KVKV…GKDD. Basic and acidic residues-rich tracts occupy residues 96–115 and 125–136; these read SDKEKQVRDASVEKASDKNR and KRNEYGKTKEID. Residues 157–173 are compositionally biased toward polar residues; sequence LLQNLSAESLTKPTESV. Residues 175–196 are compositionally biased toward basic and acidic residues; it reads TAEKPKDYTENTVIRLDEHPSL. Residues 216-236 show a composition bias toward polar residues; the sequence is NSSQRTESDQLLGTTPVNVPS. Over residues 242–255 the composition is skewed to basic and acidic residues; sequence DSDHESPSKEDEQQ. The short motif at 298 to 305 is the Nuclear localization signal 1 element; the sequence is QKKLPKVK. Composition is skewed to polar residues over residues 329–357 and 376–391; these read GVSQEDNMESSAAATISEQQDSRGTSGTI and SKAQSTRVQSDLNVSN. Basic and acidic residues-rich tracts occupy residues 428-453 and 477-487; these read GKGDQDQAHGPSDTHPEKRSPTEKPS and KTSEKKLKLDS. The Nuclear localization signal 2 signature appears at 444-451; sequence EKRSPTEK. A compositionally biased stretch (polar residues) spans 489 to 498; sequence MISSKATQPH. Residues 512-528 are compositionally biased toward basic and acidic residues; that stretch reads DKQDSRNNRKSTVGKDD. The C2HC pre-PHD-type zinc-finger motif lies at 561–612; sequence KFTCAFCQCSEDTEASGEMTHYYRGEPVSADFNGGSKVIHVHKNCAEWAPNV. The segment at 632–681 adopts a PHD-type; degenerate zinc-finger fold; sequence ISCSCCGLKGAALGCYNKSCKNSFHVTCAKLIPECRWDNVKFVMLCPLDA. 2 BRCT domains span residues 724–819 and 840–941; these read KQFH…PYEI and KKPK…LVLI.

Forms heterodimer with BARD1/ROW1. In terms of tissue distribution, expressed ubiquitously with highest levels in flower buds. Mostly expressed in flowers and siliques, and, to a lower extent, in roots, rosette leaves, inflorescence and young cauline leaves.

The protein resides in the nucleus. In terms of biological role, plays a role in DNA repair and in cell-cycle control. Required for the repair of DNA double-strand breaks (DSBs), both natural and induced by genotoxic stress, by homologous recombination (HR). This Arabidopsis thaliana (Mouse-ear cress) protein is Protein BREAST CANCER SUSCEPTIBILITY 1 homolog.